The sequence spans 229 residues: Flagellar L-ring protein (229 aa).

The first 23 residues, 1-23 (MSPLTRIALALAASAALVLALTA), serve as a signal peptide directing secretion. Cys-24 is lipidated: N-palmitoyl cysteine. A lipid anchor (S-diacylglycerol cysteine) is attached at Cys-24.

Belongs to the FlgH family. The basal body constitutes a major portion of the flagellar organelle and consists of four rings (L,P,S, and M) mounted on a central rod.

It is found in the cell outer membrane. Its subcellular location is the bacterial flagellum basal body. Functionally, assembles around the rod to form the L-ring and probably protects the motor/basal body from shearing forces during rotation. The protein is Flagellar L-ring protein of Anaeromyxobacter dehalogenans (strain 2CP-C).